The primary structure comprises 517 residues: Cytochrome P450 monooxygenase polD (517 aa).

A helical transmembrane segment spans residues 5–27; that stretch reads VVLVGIVVLVLAYLSSTGKVYPH. Cysteine 435 is a binding site for heme.

Belongs to the cytochrome P450 family. It depends on heme as a cofactor.

The protein localises to the membrane. Cytochrome P450 monooxygenase; part of the gene cluster that mediates the biosynthesis of antifungal fernane-type triterpenoid polytolypin. PolD doe not seem to be involved in the biosynthesis of polytolypin. Within the pathway, the triterpene cyclase polA first catalyzes the cyclization of 2,3-oxidosqualene to motiol, polc converts the 4-alpha-methyl group of motiol to a carboxyl group, polB is responsible for appending a hydroxyl group at the 2-alpha position and polE is a dual functional P450, which can catalyze the formation of both the 1-beta-hydroxyl group and 10-beta-carboxyl group. The sequence is that of Cytochrome P450 monooxygenase polD from Polytolypa hystricis (strain UAMH7299).